Here is a 292-residue protein sequence, read N- to C-terminus: ATP synthase gamma chain (292 aa).

It belongs to the ATPase gamma chain family. F-type ATPases have 2 components, CF(1) - the catalytic core - and CF(0) - the membrane proton channel. CF(1) has five subunits: alpha(3), beta(3), gamma(1), delta(1), epsilon(1). CF(0) has three main subunits: a, b and c.

It is found in the cell inner membrane. In terms of biological role, produces ATP from ADP in the presence of a proton gradient across the membrane. The gamma chain is believed to be important in regulating ATPase activity and the flow of protons through the CF(0) complex. This is ATP synthase gamma chain from Brucella abortus (strain S19).